We begin with the raw amino-acid sequence, 457 residues long: Hepatocyte nuclear factor 3-beta (457 aa).

The transactivation domain 1 stretch occupies residues 14–93 (DWSSYYAEPE…AGAMAGMGGS (80 aa)). The Nuclear localization signal signature appears at 106-113 (LSPSLSPL). Threonine 156 carries the phosphothreonine modification. A DNA-binding region (fork-head) is located at residues 159–252 (KPPYSYISLI…FENGCYLRRQ (94 aa)). Serine 212 and serine 283 each carry phosphoserine. The segment covering 280–292 (AQASQAQLGEAAG) has biased composition (low complexity). Positions 280–365 (AQASQAQLGE…PGLPPEAHLK (86 aa)) are disordered. A compositionally biased stretch (polar residues) spans 298–310 (PAGTESPHSSASP). A Phosphothreonine modification is found at threonine 301. Serine 303, serine 306, serine 307, and serine 309 each carry phosphoserine. The span at 339 to 352 (PGQQQQAAAHLLGP) shows a compositional bias: low complexity. The tract at residues 361 to 457 (EAHLKPEHHY…VYSRPIMNSS (97 aa)) is transactivation domain 2. Residues serine 436 and serine 457 each carry the phosphoserine modification.

Binds DNA as a monomer. Binds TLE1. Interacts with FOXA1 and FOXA3. Interacts with PRKDC. Interacts with AKT1. Interacts with TET1; this interaction may recruit TET1 to specific genomic loci to mediate their demethylation. Phosphorylation on Thr-156 abolishes binding to target promoters and subsequent transcription activation upon insulin stimulation.

It localises to the nucleus. It is found in the cytoplasm. Functionally, transcription factor that is involved in embryonic development, establishment of tissue-specific gene expression and regulation of gene expression in differentiated tissues. Is thought to act as a 'pioneer' factor opening the compacted chromatin for other proteins through interactions with nucleosomal core histones and thereby replacing linker histones at target enhancer and/or promoter sites. Binds DNA with the consensus sequence 5'-[AC]A[AT]T[AG]TT[GT][AG][CT]T[CT]-3'. In embryonic development is required for notochord formation. Involved in the development of multiple endoderm-derived organ systems such as the liver, pancreas and lungs; FOXA1 and FOXA2 seem to have at least in part redundant roles. Originally described as a transcription activator for a number of liver genes such as AFP, albumin, tyrosine aminotransferase, PEPCK, etc. Interacts with the cis-acting regulatory regions of these genes. Involved in glucose homeostasis; regulates the expression of genes important for glucose sensing in pancreatic beta-cells and glucose homeostasis. Involved in regulation of fat metabolism. Binds to fibrinogen beta promoter and is involved in IL6-induced fibrinogen beta transcriptional activation. The sequence is that of Hepatocyte nuclear factor 3-beta (FOXA2) from Homo sapiens (Human).